A 144-amino-acid polypeptide reads, in one-letter code: Large ribosomal subunit protein uL16 (144 aa).

The protein belongs to the universal ribosomal protein uL16 family. In terms of assembly, part of the 50S ribosomal subunit.

Functionally, binds 23S rRNA and is also seen to make contacts with the A and possibly P site tRNAs. This is Large ribosomal subunit protein uL16 from Enterococcus faecalis (strain ATCC 700802 / V583).